The following is a 424-amino-acid chain: Kynurenine--oxoglutarate transaminase 1 (424 aa).

G36 contributes to the substrate binding site. K82 carries the post-translational modification N6-succinyllysine. A substrate-binding site is contributed by N185. The residue at position 247 (K247) is an N6-(pyridoxal phosphate)lysine. R398 is a substrate binding site. K413 is subject to N6-succinyllysine.

Belongs to the class-I pyridoxal-phosphate-dependent aminotransferase family. Homodimer. Pyridoxal 5'-phosphate is required as a cofactor.

Its subcellular location is the cytoplasm. The protein resides in the cytosol. It carries out the reaction L-kynurenine + 2-oxoglutarate = kynurenate + L-glutamate + H2O. The catalysed reaction is 3-phenylpyruvate + L-glutamine = 2-oxoglutaramate + L-phenylalanine. The enzyme catalyses an S-substituted L-cysteine + H2O = a thiol + pyruvate + NH4(+). It participates in amino-acid degradation; L-kynurenine degradation; kynurenate from L-kynurenine: step 1/2. Its function is as follows. Catalyzes the irreversible transamination of the L-tryptophan metabolite L-kynurenine to form kynurenic acid (KA), an intermediate in the tryptophan catabolic pathway which is also a broad spectrum antagonist of the three ionotropic excitatory amino acid receptors among others. Metabolizes the cysteine conjugates of certain halogenated alkenes and alkanes to form reactive metabolites. Catalyzes the beta-elimination of S-conjugates and Se-conjugates of L-(seleno)cysteine, resulting in the cleavage of the C-S or C-Se bond. This chain is Kynurenine--oxoglutarate transaminase 1 (Kyat1), found in Mus musculus (Mouse).